The chain runs to 394 residues: Elongation factor Tu (394 aa).

One can recognise a tr-type G domain in the interval 10–205 (KPHVNIGTIG…VDNWIPLPPR (196 aa)). The G1 stretch occupies residues 19–26 (GHVDHGKT). 19-26 (GHVDHGKT) lines the GTP pocket. Residue Thr26 participates in Mg(2+) binding. A G2 region spans residues 60-64 (GITIN). The tract at residues 81–84 (DCPG) is G3. Residues 81–85 (DCPGH) and 136–139 (NKCD) contribute to the GTP site. The interval 136-139 (NKCD) is G4. A G5 region spans residues 174–176 (SAL).

Belongs to the TRAFAC class translation factor GTPase superfamily. Classic translation factor GTPase family. EF-Tu/EF-1A subfamily. In terms of assembly, monomer.

It localises to the cytoplasm. The catalysed reaction is GTP + H2O = GDP + phosphate + H(+). In terms of biological role, GTP hydrolase that promotes the GTP-dependent binding of aminoacyl-tRNA to the A-site of ribosomes during protein biosynthesis. This Bacteroides thetaiotaomicron (strain ATCC 29148 / DSM 2079 / JCM 5827 / CCUG 10774 / NCTC 10582 / VPI-5482 / E50) protein is Elongation factor Tu.